We begin with the raw amino-acid sequence, 155 residues long: Cytochrome c-type biogenesis protein CcmE (155 aa).

Residues 1 to 8 (MNPLRKKR) are Cytoplasmic-facing. Residues 9-29 (LLIIAALLAGVGLAMTLALGA) traverse the membrane as a helical; Signal-anchor for type II membrane protein segment. The Periplasmic portion of the chain corresponds to 30–155 (LKENINLFYT…GGSSTPAKQG (126 aa)). The heme site is built by His124 and Tyr128. The tract at residues 134 to 155 (TKALRDSGQAAPGGSSTPAKQG) is disordered.

Belongs to the CcmE/CycJ family.

Its subcellular location is the cell inner membrane. Heme chaperone required for the biogenesis of c-type cytochromes. Transiently binds heme delivered by CcmC and transfers the heme to apo-cytochromes in a process facilitated by CcmF and CcmH. The polypeptide is Cytochrome c-type biogenesis protein CcmE (Pseudomonas savastanoi pv. phaseolicola (strain 1448A / Race 6) (Pseudomonas syringae pv. phaseolicola (strain 1448A / Race 6))).